The chain runs to 238 residues: Phosphoribosylaminoimidazole-succinocarboxamide synthase (238 aa).

This sequence belongs to the SAICAR synthetase family.

It catalyses the reaction 5-amino-1-(5-phospho-D-ribosyl)imidazole-4-carboxylate + L-aspartate + ATP = (2S)-2-[5-amino-1-(5-phospho-beta-D-ribosyl)imidazole-4-carboxamido]succinate + ADP + phosphate + 2 H(+). Its pathway is purine metabolism; IMP biosynthesis via de novo pathway; 5-amino-1-(5-phospho-D-ribosyl)imidazole-4-carboxamide from 5-amino-1-(5-phospho-D-ribosyl)imidazole-4-carboxylate: step 1/2. This Alcanivorax borkumensis (strain ATCC 700651 / DSM 11573 / NCIMB 13689 / SK2) protein is Phosphoribosylaminoimidazole-succinocarboxamide synthase.